The primary structure comprises 62 residues: Snaclec aspercetin subunit alpha (62 aa).

Cys-2 and Cys-13 are disulfide-bonded. In terms of domain architecture, C-type lectin spans 9 to 62 (YEGHCYRFFHPPKDWADAERFCTEQAKGGALVSIQRFGEEDFVSNLITKNLQRG).

It belongs to the snaclec family. Heterodimer; disulfide-linked. In terms of tissue distribution, expressed by the venom gland.

The protein resides in the secreted. Functionally, snaclec that binds to von Willebrand factor (VWF) and induces its interaction with GPIbalpha (GP1BA) (via the vWF A1 domain), resulting in platelet aggregation. Intravenous injection in mice induces a dose-dependent drop in platelet count (thrombocytopenia). Pretreatment by intravenous injection by this protein in mice potentiates the hemorrhagic lesion in the skin provoked by the metalloproteinase BaP1 intradermally injected. This result is not observed when both BaP1 and this protein are injected simultaneously. This is Snaclec aspercetin subunit alpha from Bothrops asper (Terciopelo).